Here is a 481-residue protein sequence, read N- to C-terminus: Glutamyl-tRNA(Gln) amidotransferase subunit A (481 aa).

Catalysis depends on charge relay system residues Lys-76 and Ser-151. Ser-175 (acyl-ester intermediate) is an active-site residue.

It belongs to the amidase family. GatA subfamily. In terms of assembly, heterotrimer of A, B and C subunits.

The catalysed reaction is L-glutamyl-tRNA(Gln) + L-glutamine + ATP + H2O = L-glutaminyl-tRNA(Gln) + L-glutamate + ADP + phosphate + H(+). Its function is as follows. Allows the formation of correctly charged Gln-tRNA(Gln) through the transamidation of misacylated Glu-tRNA(Gln) in organisms which lack glutaminyl-tRNA synthetase. The reaction takes place in the presence of glutamine and ATP through an activated gamma-phospho-Glu-tRNA(Gln). The sequence is that of Glutamyl-tRNA(Gln) amidotransferase subunit A from Chlorobaculum tepidum (strain ATCC 49652 / DSM 12025 / NBRC 103806 / TLS) (Chlorobium tepidum).